The following is a 199-amino-acid chain: ATP-dependent Clp protease proteolytic subunit 2 (199 aa).

Ser-98 serves as the catalytic Nucleophile. Residue His-123 is part of the active site.

The protein belongs to the peptidase S14 family. Fourteen ClpP subunits assemble into 2 heptameric rings which stack back to back to give a disk-like structure with a central cavity, resembling the structure of eukaryotic proteasomes.

The protein resides in the cytoplasm. The enzyme catalyses Hydrolysis of proteins to small peptides in the presence of ATP and magnesium. alpha-casein is the usual test substrate. In the absence of ATP, only oligopeptides shorter than five residues are hydrolyzed (such as succinyl-Leu-Tyr-|-NHMec, and Leu-Tyr-Leu-|-Tyr-Trp, in which cleavage of the -Tyr-|-Leu- and -Tyr-|-Trp bonds also occurs).. Its function is as follows. Cleaves peptides in various proteins in a process that requires ATP hydrolysis. Has a chymotrypsin-like activity. Plays a major role in the degradation of misfolded proteins. In Corynebacterium diphtheriae (strain ATCC 700971 / NCTC 13129 / Biotype gravis), this protein is ATP-dependent Clp protease proteolytic subunit 2.